The primary structure comprises 543 residues: CTP synthase (543 aa).

An amidoligase domain region spans residues 1–265; sequence MTRYVFITGG…DREVLRHFGL (265 aa). Ser-13 provides a ligand contact to CTP. Ser-13 is a binding site for UTP. 14 to 19 contacts ATP; sequence SLGKGI. Tyr-54 contributes to the L-glutamine binding site. An ATP-binding site is contributed by Asp-71. The Mg(2+) site is built by Asp-71 and Glu-139. Residues 146–148, 186–191, and Lys-222 each bind CTP; these read DIE and KTKPTQ. UTP contacts are provided by residues 186-191 and Lys-222; that span reads KTKPTQ. An ATP-binding site is contributed by Val-240. The Glutamine amidotransferase type-1 domain maps to 291-542; the sequence is TIAVVGKYTN…IEAAVKQMRL (252 aa). Gly-353 provides a ligand contact to L-glutamine. The Nucleophile; for glutamine hydrolysis role is filled by Cys-380. L-glutamine is bound by residues 381 to 384, Glu-404, and Arg-470; that span reads FGMQ. Residues His-515 and Glu-517 contribute to the active site.

The protein belongs to the CTP synthase family. As to quaternary structure, homotetramer.

It carries out the reaction UTP + L-glutamine + ATP + H2O = CTP + L-glutamate + ADP + phosphate + 2 H(+). The enzyme catalyses L-glutamine + H2O = L-glutamate + NH4(+). The catalysed reaction is UTP + NH4(+) + ATP = CTP + ADP + phosphate + 2 H(+). Its pathway is pyrimidine metabolism; CTP biosynthesis via de novo pathway; CTP from UDP: step 2/2. Allosterically activated by GTP, when glutamine is the substrate; GTP has no effect on the reaction when ammonia is the substrate. The allosteric effector GTP functions by stabilizing the protein conformation that binds the tetrahedral intermediate(s) formed during glutamine hydrolysis. Inhibited by the product CTP, via allosteric rather than competitive inhibition. Its function is as follows. Catalyzes the ATP-dependent amination of UTP to CTP with either L-glutamine or ammonia as the source of nitrogen. Regulates intracellular CTP levels through interactions with the four ribonucleotide triphosphates. In Acidiphilium cryptum (strain JF-5), this protein is CTP synthase.